Here is a 1833-residue protein sequence, read N- to C-terminus: Proteasome activator complex subunit 4A (1833 aa).

2 HEAT repeats span residues 460–504 and 983–1022; these read PEGP…LVDC and NFCCRDIIPVVLKYLDPERTDVTQQQFKGALYCLLGNHSG. The interval 1095–1122 is disordered; sequence SSSPEPNPGAASEQEELEGRKREEQKNK. A compositionally biased stretch (basic and acidic residues) spans 1111 to 1122; sequence LEGRKREEQKNK. HEAT repeat units lie at residues 1164–1202, 1344–1382, 1626–1664, and 1670–1708; these read LPLPSSAVLFFVESLNHDSLLVRNVAISAVAGILKQLKR, DAFLPLLKPHMERLVADSHESPQRCVAEIISGLIRGSKH, SDQIPQVLSALEEISRSSSWHARYTILTYLQIMVFYNLF, and AKAVCDVRALVLRLLEDEQLEVREMAATTLSGFLQCNFL. The tract at residues 1640–1728 is bromodomain-like (BRDL); the sequence is SRSSSWHARY…ESLSKTRLPK (89 aa).

Belongs to the BLM10 family. In terms of assembly, homodimer. Interacts with the 20S and 26S proteasomes.

It is found in the cytoplasm. The protein localises to the cytosol. Its subcellular location is the nucleus. It localises to the nucleus speckle. Its function is as follows. Associated component of the proteasome that specifically recognizes acetylated histones and promotes ATP- and ubiquitin-independent degradation of core histones during DNA damage response. Recognizes and binds acetylated histones via its bromodomain-like (BRDL) region and activates the proteasome by opening the gated channel for substrate entry. Binds to the core proteasome via its C-terminus, which occupies the same binding sites as the proteasomal ATPases, opening the closed structure of the proteasome via an active gating mechanism. involved in DNA damage response in somatic cells: binds to acetylated histones and promotes degradation of histones. The chain is Proteasome activator complex subunit 4A (psme4a) from Danio rerio (Zebrafish).